Consider the following 343-residue polypeptide: Holliday junction branch migration complex subunit RuvB (343 aa).

The interval 1–186 (MVMARKSDTL…FQIQERLEYY (186 aa)) is large ATPase domain (RuvB-L). ATP is bound by residues leucine 25, arginine 26, glycine 67, lysine 70, threonine 71, serine 72, 133-135 (EDF), arginine 176, tyrosine 186, and arginine 223. Mg(2+) is bound at residue threonine 71. A small ATPAse domain (RuvB-S) region spans residues 187-257 (DAKALESILH…LAQKSLDRLG (71 aa)). Positions 260–343 (ASGLDSMDRK…PPPTPQGSLF (84 aa)) are head domain (RuvB-H). DNA is bound by residues arginine 296, arginine 315, and arginine 320.

Belongs to the RuvB family. In terms of assembly, homohexamer. Forms an RuvA(8)-RuvB(12)-Holliday junction (HJ) complex. HJ DNA is sandwiched between 2 RuvA tetramers; dsDNA enters through RuvA and exits via RuvB. An RuvB hexamer assembles on each DNA strand where it exits the tetramer. Each RuvB hexamer is contacted by two RuvA subunits (via domain III) on 2 adjacent RuvB subunits; this complex drives branch migration. In the full resolvosome a probable DNA-RuvA(4)-RuvB(12)-RuvC(2) complex forms which resolves the HJ.

The protein resides in the cytoplasm. The catalysed reaction is ATP + H2O = ADP + phosphate + H(+). Functionally, the RuvA-RuvB-RuvC complex processes Holliday junction (HJ) DNA during genetic recombination and DNA repair, while the RuvA-RuvB complex plays an important role in the rescue of blocked DNA replication forks via replication fork reversal (RFR). RuvA specifically binds to HJ cruciform DNA, conferring on it an open structure. The RuvB hexamer acts as an ATP-dependent pump, pulling dsDNA into and through the RuvAB complex. RuvB forms 2 homohexamers on either side of HJ DNA bound by 1 or 2 RuvA tetramers; 4 subunits per hexamer contact DNA at a time. Coordinated motions by a converter formed by DNA-disengaged RuvB subunits stimulates ATP hydrolysis and nucleotide exchange. Immobilization of the converter enables RuvB to convert the ATP-contained energy into a lever motion, pulling 2 nucleotides of DNA out of the RuvA tetramer per ATP hydrolyzed, thus driving DNA branch migration. The RuvB motors rotate together with the DNA substrate, which together with the progressing nucleotide cycle form the mechanistic basis for DNA recombination by continuous HJ branch migration. Branch migration allows RuvC to scan DNA until it finds its consensus sequence, where it cleaves and resolves cruciform DNA. In Myxococcus xanthus (strain DK1622), this protein is Holliday junction branch migration complex subunit RuvB.